The chain runs to 465 residues: Nuclear pore complex protein NUP50B (465 aa).

Disordered stretches follow at residues 1 to 44 (MGDS…TFNT) and 59 to 244 (RRTD…FHQH). An N-acetylglycine modification is found at Gly2. Residues 26-35 (GLDDDDEDTS) show a composition bias toward acidic residues. The span at 81–97 (PFTAPAPSTAAAETTKP) shows a compositional bias: low complexity. Basic and acidic residues-rich tracts occupy residues 105-127 (TLAD…KSDA), 141-157 (ISAK…KEMS), and 216-233 (TEKE…EKNG). Position 125 is a phosphoserine (Ser125). A run of 3 repeats spans residues 266–267 (FG), 286–287 (FG), and 297–298 (FG). Positions 266 to 298 (FGLVPQEGSTGSGSEQSSFSFGQANNGNSSLFG) are 3 X 2 AA repeats of F-G. Disordered regions lie at residues 308–330 (KSTE…GEEN) and 439–465 (HKDS…AEDA). Residue Thr455 is modified to Phosphothreonine. The span at 456–465 (PENSPSAEDA) shows a compositional bias: polar residues. Ser459 carries the post-translational modification Phosphoserine.

As to quaternary structure, part of the nuclear pore complex (NPC). The NPC has an eight-fold symmetrical structure comprising a central transport channel and two rings, the cytoplasmic and nuclear rings, to which eight filaments are attached. The cytoplasmic filaments have loose ends, while the nuclear filaments are joined in a distal ring, forming a nuclear basket. NPCs are highly dynamic in configuration and composition, and can be devided in 3 subcomplexes, the NUP62 subcomplex, the NUP107-160 subcomplex and the NUP93 subcomplex, containing approximately 30 different nucleoporin proteins.

It localises to the nucleus. The protein resides in the nucleoplasm. The protein localises to the nuclear pore complex. Probably involved in nucleocytoplasmic transport via its interactions with importins and Ran, rather than by forming part of the nuclear pore complex (NPC) scaffolding. The sequence is that of Nuclear pore complex protein NUP50B from Arabidopsis thaliana (Mouse-ear cress).